Here is a 618-residue protein sequence, read N- to C-terminus: Membrane protein insertase YidC (618 aa).

The next 6 membrane-spanning stretches (helical) occupy residues 3–23 (KNTI…SFLS), 363–383 (WGLS…IVVF), 439–459 (LPML…PSAI), 478–498 (FITF…FCLL), 520–540 (PQMA…LFVL), and 545–565 (SGLN…MIIL).

It belongs to the OXA1/ALB3/YidC family. Type 1 subfamily. Interacts with the Sec translocase complex via SecD. Specifically interacts with transmembrane segments of nascent integral membrane proteins during membrane integration.

The protein localises to the cell membrane. Functionally, required for the insertion and/or proper folding and/or complex formation of integral membrane proteins into the membrane. Involved in integration of membrane proteins that insert both dependently and independently of the Sec translocase complex, as well as at least some lipoproteins. Aids folding of multispanning membrane proteins. The sequence is that of Membrane protein insertase YidC from Bacteroides fragilis (strain YCH46).